We begin with the raw amino-acid sequence, 230 residues long: uncharacterized protein (230 aa).

This sequence to E.coli HemX N-terminal region.

This is an uncharacterized protein from Haemophilus influenzae (strain ATCC 51907 / DSM 11121 / KW20 / Rd).